We begin with the raw amino-acid sequence, 276 residues long: Small ribosomal subunit protein uS2 (276 aa).

The disordered stretch occupies residues 255–276 (ASATATAAPTEAGAPEPTTDPS).

It belongs to the universal ribosomal protein uS2 family.

In Mycolicibacterium paratuberculosis (strain ATCC BAA-968 / K-10) (Mycobacterium paratuberculosis), this protein is Small ribosomal subunit protein uS2.